The following is a 182-amino-acid chain: MSTGLQKGSRLMENRSPPSSFSIEHILGLDKKMDVASSPIIKHHRPWIECSSKVDGTFRQIPLIYDLPVQVDAMRRSAEEETKIRLDRGEEERLTYKREQSWYRGRRPRTAFTRGQIEILENVFRVNSYPGIDVREELASKLALDEDRIQIWFQNRRAKLKRSHRESQFLIVKDSLSSKIEE.

Positions 103–163 (YRGRRPRTAF…QNRRAKLKRS (61 aa)) form a DNA-binding region, homeobox.

Belongs to the ANF homeobox family. As to expression, initially expressed in the anterior dorsal region of early embryos and later exclusively in the primordium of the anterior pituitary gland.

It localises to the nucleus. In terms of biological role, appears to be involved in the regional specification of the anterior head of Xenopus embryos. In Xenopus laevis (African clawed frog), this protein is Homeobox expressed in ES cells 1-A (hesx1-a).